We begin with the raw amino-acid sequence, 170 residues long: Envelope protein 166 (170 aa).

A topological domain (intravirion) is located at residue Met-1. Residues 2 to 22 form a helical membrane-spanning segment; that stretch reads FYPVVQVLIGIILVIILILGF. Over 23-170 the chain is Virion surface; the sequence is YHMKHKPPKK…TVMGIARNVL (148 aa).

Belongs to the asfivirus envelope protein p22 family.

Its subcellular location is the virion membrane. It is found in the host cell membrane. The chain is Envelope protein 166 from Ornithodoros (relapsing fever ticks).